The primary structure comprises 264 residues: 4-oxalocrotonate decarboxylase (264 aa).

This sequence belongs to the hydratase/decarboxylase family.

The catalysed reaction is (3E)-2-oxohex-3-enedioate + H(+) = 2-oxopent-4-enoate + CO2. It participates in xenobiotic degradation; toluene degradation. This Pseudomonas putida (Arthrobacter siderocapsulatus) protein is 4-oxalocrotonate decarboxylase (xylI).